We begin with the raw amino-acid sequence, 283 residues long: Formamidopyrimidine-DNA glycosylase (283 aa).

Pro2 serves as the catalytic Schiff-base intermediate with DNA. Glu3 (proton donor) is an active-site residue. Catalysis depends on Lys60, which acts as the Proton donor; for beta-elimination activity. Positions 95, 114, and 159 each coordinate DNA. The FPG-type zinc-finger motif lies at 244 to 278 (WVYGRHNQPCRVCGTPIERIKLGGRSSHFCPQCQP). Residue Arg268 is the Proton donor; for delta-elimination activity of the active site.

It belongs to the FPG family. Monomer. The cofactor is Zn(2+).

It catalyses the reaction Hydrolysis of DNA containing ring-opened 7-methylguanine residues, releasing 2,6-diamino-4-hydroxy-5-(N-methyl)formamidopyrimidine.. It carries out the reaction 2'-deoxyribonucleotide-(2'-deoxyribose 5'-phosphate)-2'-deoxyribonucleotide-DNA = a 3'-end 2'-deoxyribonucleotide-(2,3-dehydro-2,3-deoxyribose 5'-phosphate)-DNA + a 5'-end 5'-phospho-2'-deoxyribonucleoside-DNA + H(+). In terms of biological role, involved in base excision repair of DNA damaged by oxidation or by mutagenic agents. Acts as a DNA glycosylase that recognizes and removes damaged bases. Has a preference for oxidized purines, such as 7,8-dihydro-8-oxoguanine (8-oxoG). Has AP (apurinic/apyrimidinic) lyase activity and introduces nicks in the DNA strand. Cleaves the DNA backbone by beta-delta elimination to generate a single-strand break at the site of the removed base with both 3'- and 5'-phosphates. This Crocosphaera subtropica (strain ATCC 51142 / BH68) (Cyanothece sp. (strain ATCC 51142)) protein is Formamidopyrimidine-DNA glycosylase.